The primary structure comprises 774 residues: RNA exonuclease 5 (774 aa).

The segment covering 1 to 19 has biased composition (basic and acidic residues); the sequence is MEPEREGTERHPRKVRESR. The interval 1 to 22 is disordered; sequence MEPEREGTERHPRKVRESRQAP. The region spanning 228–376 is the Exonuclease domain; the sequence is LFGLDCEMCL…EDARTILELA (149 aa). 2 RRM domains span residues 505–579 and 600–679; these read STVY…RPVT and GSIY…RHLH.

The sequence is that of RNA exonuclease 5 from Homo sapiens (Human).